Here is a 63-residue protein sequence, read N- to C-terminus: Hypoxia-inducible lipid droplet-associated protein (63 aa).

The segment at Met1 to Gly37 is required for targeting to lipid droplets. Residues Leu7–Val23 form a helical membrane-spanning segment. A disordered region spans residues Leu31–Met63. The segment covering Ser35 to Pro51 has biased composition (polar residues). Ser44 is subject to Phosphoserine.

In terms of tissue distribution, highly expressed in renal cell carcinoma cells but barely detectable in adjacent normal kidney tissue. Detected in some cervical and endometrial cancers. Expression also detected in fetal kidney with little or no expression observed in normal adult heart, liver, lung, pancreas, prostate or spinal cord (at protein level).

It localises to the lipid droplet. The protein resides in the secreted. The protein localises to the membrane. Functionally, increases intracellular lipid accumulation. Stimulates expression of cytokines including IL6, MIF and VEGFA. Enhances cell growth and proliferation. In Homo sapiens (Human), this protein is Hypoxia-inducible lipid droplet-associated protein (HILPDA).